A 493-amino-acid polypeptide reads, in one-letter code: Rho guanine nucleotide exchange factor 9 (493 aa).

The SH3 domain occupies 15–74; sequence DSIVSAEAVWDHVTMANRGVAFKAGDVIKVLDASNKDWWWGQIDDEEGWFPASFVRLWVN. The interaction with GPHN stretch occupies residues 107–117; sequence RDQMRANVINE. Positions 110–294 constitute a DH domain; sequence MRANVINEIM…RNVTQQINER (185 aa). Residues 325–432 form the PH domain; sequence ELIYTGEMAW…WLRAFREERK (108 aa). The segment at 453–473 is disordered; that stretch reads AMTVRKASKQKGRVGEEENQS.

Interacts with GPHN. Detected in brain, throughout the gray matter. Detected at low levels in heart and skeletal muscle.

The protein localises to the cytoplasm. It localises to the postsynaptic density. Functionally, acts as a guanine nucleotide exchange factor (GEF) for CDC42. Promotes formation of GPHN clusters. In Rattus norvegicus (Rat), this protein is Rho guanine nucleotide exchange factor 9 (Arhgef9).